A 450-amino-acid polypeptide reads, in one-letter code: Tubulin alpha chain (450 aa).

Position 11 (Gln-11) interacts with GTP. An N6-acetyllysine modification is found at Lys-40. 6 residues coordinate GTP: Glu-71, Gly-144, Thr-145, Thr-179, Asn-206, and Asn-228. Residue Glu-71 participates in Mg(2+) binding. Glu-254 is a catalytic residue.

This sequence belongs to the tubulin family. In terms of assembly, dimer of alpha and beta chains. A typical microtubule is a hollow water-filled tube with an outer diameter of 25 nm and an inner diameter of 15 nM. Alpha-beta heterodimers associate head-to-tail to form protofilaments running lengthwise along the microtubule wall with the beta-tubulin subunit facing the microtubule plus end conferring a structural polarity. Microtubules usually have 13 protofilaments but different protofilament numbers can be found in some organisms and specialized cells. The cofactor is Mg(2+). Undergoes a tyrosination/detyrosination cycle, the cyclic removal and re-addition of a C-terminal tyrosine residue by the enzymes tubulin tyrosine carboxypeptidase (TTCP) and tubulin tyrosine ligase (TTL), respectively. Post-translationally, acetylation of alpha chains at Lys-40 stabilizes microtubules and affects affinity and processivity of microtubule motors. This modification has a role in multiple cellular functions, ranging from cell motility, cell cycle progression or cell differentiation to intracellular trafficking and signaling.

It is found in the cytoplasm. The protein localises to the cytoskeleton. It carries out the reaction GTP + H2O = GDP + phosphate + H(+). Its function is as follows. Tubulin is the major constituent of microtubules, a cylinder consisting of laterally associated linear protofilaments composed of alpha- and beta-tubulin heterodimers. Microtubules grow by the addition of GTP-tubulin dimers to the microtubule end, where a stabilizing cap forms. Below the cap, tubulin dimers are in GDP-bound state, owing to GTPase activity of alpha-tubulin. This Prunus dulcis (Almond) protein is Tubulin alpha chain (TUBA).